The chain runs to 2388 residues: Spectrin beta chain, non-erythrocytic 2 (2388 aa).

Serine 2 is modified (N-acetylserine). The segment at 2–278 is actin-binding; that stretch reads SSTLSPTDFD…IITYVATYYH (277 aa). Phosphoserine occurs at positions 6 and 31. Calponin-homology (CH) domains lie at 57–161 and 176–281; these read AVQK…LRFQ and KSAK…HYFS. Spectrin repeat units lie at residues 306–414, 427–527, 532–639, 642–744, 749–849, and 856–954; these read LVEK…LALR, AARF…RERL, ELQK…RLEE, RLWR…QRLA, LYQF…RALE, and TMLS…KAAL. The residue at position 959 (serine 959) is a Phosphoserine. Spectrin repeat units lie at residues 960-1063, 1066-1169, 1174-1266, 1279-1379, 1384-1485, 1489-1586, 1589-1692, 1696-1797, 1801-1904, 1910-2010, and 2017-2078; these read IQNY…SLGE, RLQD…GRLA, FQGF…NQEA, EQQH…ARSL, RAEL…RRLQ, EQHQ…RLEE, RAQQ…RLQE, LCQL…GQVL, YELQ…QLLL, FRFF…DWLQ, and VFGR…LTAL. A Phosphoserine modification is found at serine 1073. Serine 1574 is modified (phosphoserine). The span at 2080–2096 shows a compositional bias: basic and acidic residues; sequence ERENEQKRKREEEERRK. Disordered stretches follow at residues 2080-2112 and 2124-2207; these read EREN…EGSL and DGTQ…HVAT. Polar residues predominate over residues 2124–2163; it reads DGTQSKLPPSTQAPSINGVCTDTESSQPLLEQQRLEQSNV. Residues serine 2169 and serine 2199 each carry the phosphoserine modification. The PH domain occupies 2218–2328; that stretch reads QEQMEGTLCR…WLRVVNAAIA (111 aa). Residues 2333–2388 are disordered; that stretch reads ASGEPEEPVVPSASRGLTRAMTMPPVSQPEGSIVLRSKDGREREREKRFSFFKKNK. Residue threonine 2354 is modified to Phosphothreonine. Serine 2359 is modified (phosphoserine). Positions 2368 to 2381 are enriched in basic and acidic residues; the sequence is RSKDGREREREKRF.

It belongs to the spectrin family. As to expression, abundantly transcribed in the brain. Neurons are the predominant cell-type to express the gene. Found abundantly in Purkinje cells.

Its subcellular location is the cytoplasm. The protein resides in the cytoskeleton. It localises to the cell cortex. Functionally, probably plays an important role in neuronal membrane skeleton. This chain is Spectrin beta chain, non-erythrocytic 2 (Sptbn2), found in Rattus norvegicus (Rat).